Here is a 326-residue protein sequence, read N- to C-terminus: Flap endonuclease 1 (326 aa).

Residues 1–100 are N-domain; that stretch reads MGNAALRQLA…EEVQERRVAR (100 aa). Mg(2+) is bound by residues Asp-28, Asp-82, Glu-154, Glu-156, Asp-175, Asp-177, and Asp-225. Residues 118-246 are I-domain; that stretch reads AASRLEARTQ…TAISAINDHG (129 aa). The tract at residues 318–326 is interaction with PCNA; sequence VQTGLDEWI.

Belongs to the XPG/RAD2 endonuclease family. FEN1 subfamily. As to quaternary structure, interacts with PCNA. PCNA stimulates the nuclease activity without altering cleavage specificity. Mg(2+) serves as cofactor.

Its function is as follows. Structure-specific nuclease with 5'-flap endonuclease and 5'-3' exonuclease activities involved in DNA replication and repair. During DNA replication, cleaves the 5'-overhanging flap structure that is generated by displacement synthesis when DNA polymerase encounters the 5'-end of a downstream Okazaki fragment. Binds the unpaired 3'-DNA end and kinks the DNA to facilitate 5' cleavage specificity. Cleaves one nucleotide into the double-stranded DNA from the junction in flap DNA, leaving a nick for ligation. Also involved in the base excision repair (BER) pathway. Acts as a genome stabilization factor that prevents flaps from equilibrating into structures that lead to duplications and deletions. Also possesses 5'-3' exonuclease activity on nicked or gapped double-stranded DNA. This is Flap endonuclease 1 from Haloquadratum walsbyi (strain DSM 16790 / HBSQ001).